We begin with the raw amino-acid sequence, 412 residues long: Divalent metal cation transporter MntH (412 aa).

Topologically, residues 1–19 (MTNYRVESSSGRAARKMRL) are cytoplasmic. Residues 20 to 39 (ALMGPAFIAAIGYIDPGNFA) form a helical membrane-spanning segment. Residues 40–51 (TNIQAGASFGYQ) lie on the Periplasmic side of the membrane. Residues 52 to 71 (LLWVVVWANLMAMLIQILSA) traverse the membrane as a helical segment. Residues 72–95 (KLGIATGKNLAEQIRDHYPRPVVW) are Cytoplasmic-facing. Residues 96–118 (FYWVQAEIIAMATDLAEFIGAAI) form a helical membrane-spanning segment. Over 119 to 125 (GFKLILG) the chain is Periplasmic. Residues 126-145 (VSLLQGAVLTGIATFLILML) form a helical membrane-spanning segment. At 146 to 155 (QRRGQKPLEK) the chain is on the cytoplasmic side. The chain crosses the membrane as a helical span at residues 156–175 (VIGGLLLFVAAAYIVELIFS). The Periplasmic segment spans residues 176-196 (QPNLAQLGKGMVIPSLPTSEA). A helical membrane pass occupies residues 197 to 220 (VFLAAGVLGATIMPHVIYLHSSLT). Over 221 to 238 (QHLHGGSRQQRYSATKWD) the chain is Cytoplasmic. Residues 239–258 (VAIAMTIAGFVNLAMMATAA) traverse the membrane as a helical segment. The Periplasmic portion of the chain corresponds to 259–276 (AAFHFSGHTGVADLDEAY). A helical transmembrane segment spans residues 277-297 (LTLQPLLSHAAATVFGLSLVA). At 298-327 (AGLSSTVVGTLAGQVVMQGFIRFHIPLWVR) the chain is on the cytoplasmic side. The helical transmembrane segment at 328-344 (RTVTMLPSFIVILMGLD) threads the bilayer. At 345-350 (PTRILV) the chain is on the periplasmic side. The helical transmembrane segment at 351-370 (MSQVLLSFGIALALVPLLIF) threads the bilayer. At 371 to 387 (TSDSKLMGDLVNSKRVK) the chain is on the cytoplasmic side. Residues 388–406 (QTGWVIVVLVVALNIWLLV) form a helical membrane-spanning segment. The Periplasmic segment spans residues 407-412 (GTALGL).

Belongs to the NRAMP family.

Its subcellular location is the cell inner membrane. Its function is as follows. H(+)-stimulated, divalent metal cation uptake system. The sequence is that of Divalent metal cation transporter MntH from Escherichia fergusonii (strain ATCC 35469 / DSM 13698 / CCUG 18766 / IAM 14443 / JCM 21226 / LMG 7866 / NBRC 102419 / NCTC 12128 / CDC 0568-73).